We begin with the raw amino-acid sequence, 467 residues long: Cytochrome c-552 (467 aa).

The N-terminal stretch at 1 to 27 is a signal peptide; that stretch reads MMKKMTGKSFALSALVAASFMAAGAMA. Histidine 87 is a heme c binding site. Heme contacts are provided by cysteine 115, cysteine 118, and lysine 119. Cysteine 153, cysteine 156, histidine 157, cysteine 195, cysteine 198, and histidine 199 together coordinate heme c. Residues glutamate 201, tyrosine 202, lysine 250, and glutamine 252 each contribute to the Ca(2+) site. Tyrosine 202 contributes to the substrate binding site. Substrate is bound at residue histidine 253. Residues histidine 264, cysteine 271, cysteine 274, histidine 275, histidine 290, cysteine 303, cysteine 306, histidine 307, and histidine 382 each coordinate heme c.

The protein belongs to the cytochrome c-552 family. It depends on Ca(2+) as a cofactor. Heme c is required as a cofactor.

It is found in the periplasm. The enzyme catalyses 6 Fe(III)-[cytochrome c] + NH4(+) + 2 H2O = 6 Fe(II)-[cytochrome c] + nitrite + 8 H(+). It participates in nitrogen metabolism; nitrate reduction (assimilation). Its function is as follows. Catalyzes the reduction of nitrite to ammonia, consuming six electrons in the process. This is Cytochrome c-552 from Shewanella sp. (strain W3-18-1).